Here is a 379-residue protein sequence, read N- to C-terminus: Probable G-protein coupled receptor No18 (379 aa).

Over Glu5–Thr36 the chain is Extracellular. Residue Asn17 is glycosylated (N-linked (GlcNAc...) asparagine). The chain crosses the membrane as a helical span at residues Ala37–Phe58. Topologically, residues Thr59–Asn68 are cytoplasmic. The helical transmembrane segment at Phe69–Val90 threads the bilayer. Over Ala91–Met107 the chain is Extracellular. An intrachain disulfide couples Cys105 to Cys184. A helical transmembrane segment spans residues Trp108 to Leu128. Topologically, residues Asp129 to Arg148 are cytoplasmic. Residues Val149–Trp171 traverse the membrane as a helical segment. Over Asn172–Ser196 the chain is Extracellular. The chain crosses the membrane as a helical span at residues Ser197–Ala218. Residues Thr219–Val303 lie on the Cytoplasmic side of the membrane. The segment at Ala234–Pro276 is disordered. The chain crosses the membrane as a helical span at residues Leu304–Val325. The Extracellular segment spans residues Pro326 to Asp340. The helical transmembrane segment at Phe341–Lys362 threads the bilayer. Residues Asp363 to Asp375 are Cytoplasmic-facing.

The protein belongs to the G-protein coupled receptor 1 family.

The protein localises to the cell membrane. Functionally, probable G-protein coupled receptor for an amine. The chain is Probable G-protein coupled receptor No18 from Amphibalanus amphitrite (Striped barnacle).